The following is a 255-amino-acid chain: Acid phosphatase 1 (255 aa).

The N-terminal stretch at 1–15 (MRIFVFLVLLTVAIG) is a signal peptide. The N-linked (GlcNAc...) asparagine glycan is linked to Asn142.

Belongs to the APS1/VSP family.

It carries out the reaction a phosphate monoester + H2O = an alcohol + phosphate. This is Acid phosphatase 1 (APS1) from Solanum lycopersicum (Tomato).